We begin with the raw amino-acid sequence, 269 residues long: Regulatory protein RecX (269 aa).

It belongs to the RecX family.

It localises to the cytoplasm. Its function is as follows. Modulates RecA activity. The protein is Regulatory protein RecX of Listeria welshimeri serovar 6b (strain ATCC 35897 / DSM 20650 / CCUG 15529 / CIP 8149 / NCTC 11857 / SLCC 5334 / V8).